The sequence spans 207 residues: Protein GrpE (207 aa).

The tract at residues 1–31 is disordered; sequence MSEHQTPPEEDLTVANGDSAEAVSEPDVTVA.

It belongs to the GrpE family. Homodimer.

The protein resides in the cytoplasm. In terms of biological role, participates actively in the response to hyperosmotic and heat shock by preventing the aggregation of stress-denatured proteins, in association with DnaK and GrpE. It is the nucleotide exchange factor for DnaK and may function as a thermosensor. Unfolded proteins bind initially to DnaJ; upon interaction with the DnaJ-bound protein, DnaK hydrolyzes its bound ATP, resulting in the formation of a stable complex. GrpE releases ADP from DnaK; ATP binding to DnaK triggers the release of the substrate protein, thus completing the reaction cycle. Several rounds of ATP-dependent interactions between DnaJ, DnaK and GrpE are required for fully efficient folding. In Synechococcus elongatus (strain ATCC 33912 / PCC 7942 / FACHB-805) (Anacystis nidulans R2), this protein is Protein GrpE.